We begin with the raw amino-acid sequence, 422 residues long: Glutamyl-tRNA reductase (422 aa).

Substrate contacts are provided by residues 50 to 53 (TCNR), serine 110, 115 to 117 (ETQ), and glutamine 121. Catalysis depends on cysteine 51, which acts as the Nucleophile. Residue 190 to 195 (GAGEMS) coordinates NADP(+).

This sequence belongs to the glutamyl-tRNA reductase family. Homodimer.

The enzyme catalyses (S)-4-amino-5-oxopentanoate + tRNA(Glu) + NADP(+) = L-glutamyl-tRNA(Glu) + NADPH + H(+). Its pathway is porphyrin-containing compound metabolism; protoporphyrin-IX biosynthesis; 5-aminolevulinate from L-glutamyl-tRNA(Glu): step 1/2. In terms of biological role, catalyzes the NADPH-dependent reduction of glutamyl-tRNA(Glu) to glutamate 1-semialdehyde (GSA). This is Glutamyl-tRNA reductase from Campylobacter fetus subsp. fetus (strain 82-40).